Consider the following 278-residue polypeptide: MMTLSYIDPIAFELGPISVRWYGIIIAMGILLGYFIAQASVKRIGFHQDTLVDIIFWSAIFGFIIARIYFVIFQWPYYVQHPIEIPMIWQGGIAIHGGLIGGFVTGIIICKQKNINPFQIGDVIAPSMILGQGIGRWGNFMNHEAHGGTVSKSFLENLHIPDFIINNMYIDGKYYQPTFLYESIWDVLGFVILILLRKHLRIGDTFCLYLIWYSIGRFFVEGMRTDSLMLAGDIRIAQLMSIILIIIGVVIMIVRRVKYDAPRYKAVGPLSWPSKEVK.

Transmembrane regions (helical) follow at residues 21-41 (WYGI…QASV), 54-74 (IIFW…VIFQ), and 88-108 (IWQG…TGII). An a 1,2-diacyl-sn-glycero-3-phospho-(1'-sn-glycerol)-binding site is contributed by Arg136. 3 consecutive transmembrane segments (helical) span residues 176–196 (QPTF…LILL), 202–222 (IGDT…FVEG), and 234–254 (IRIA…IMIV).

It belongs to the Lgt family.

The protein localises to the cell membrane. The catalysed reaction is L-cysteinyl-[prolipoprotein] + a 1,2-diacyl-sn-glycero-3-phospho-(1'-sn-glycerol) = an S-1,2-diacyl-sn-glyceryl-L-cysteinyl-[prolipoprotein] + sn-glycerol 1-phosphate + H(+). Its pathway is protein modification; lipoprotein biosynthesis (diacylglyceryl transfer). Functionally, catalyzes the transfer of the diacylglyceryl group from phosphatidylglycerol to the sulfhydryl group of the N-terminal cysteine of a prolipoprotein, the first step in the formation of mature lipoproteins. The polypeptide is Phosphatidylglycerol--prolipoprotein diacylglyceryl transferase (Staphylococcus saprophyticus subsp. saprophyticus (strain ATCC 15305 / DSM 20229 / NCIMB 8711 / NCTC 7292 / S-41)).